The chain runs to 483 residues: Type 2 glycosyltransferase (483 aa).

A helical membrane pass occupies residues 21–41; it reads AVVYLSALFTPWFTAFCVLWL. Positions 156–158 match the Dxd motif motif; that stretch reads DDD. Residues 301–305 carry the QxxxRW motif motif; that stretch reads QCSRW. An N-linked (GlcNAc...) asparagine glycan is attached at Asn-313. Transmembrane regions (helical) follow at residues 336 to 356, 369 to 389, and 396 to 416; these read IATF…ALWW, AIYA…VGLF, and IMFL…KIYA. Residue Asn-421 is glycosylated (N-linked (GlcNAc...) asparagine).

It belongs to the GT2 glycosyltransferase family.

The protein localises to the cell membrane. Glycosyltransferase that plays an important role in infection-related morphogenesis and pathogenesis. Involved in stress tolerance and hyphal hydrophobicity via its regulation of the expression of nydrophobin MPG1. May regulate growth, pathogenicity, and cell wall integrity (CWI) through glycosylation of heat shock protein SSB1, and other (unidentified) substrates may contribute to conidiation. Candidate proteins as potential substrates of GT2 include several heat shock proteins (SSB1/MGG_02503, MGG_06759 and MGG_06958), two coiled-coil domain-containing proteins (MGG_04321 and MGG_09571), aminopeptidase 2 (MGG_16472), and a nuclease domain-containing protein (MGG_12646). This Pyricularia oryzae (strain 70-15 / ATCC MYA-4617 / FGSC 8958) (Rice blast fungus) protein is Type 2 glycosyltransferase.